Reading from the N-terminus, the 172-residue chain is Large ribosomal subunit protein uL10 (172 aa).

The protein belongs to the universal ribosomal protein uL10 family. As to quaternary structure, part of the ribosomal stalk of the 50S ribosomal subunit. The N-terminus interacts with L11 and the large rRNA to form the base of the stalk. The C-terminus forms an elongated spine to which L12 dimers bind in a sequential fashion forming a multimeric L10(L12)X complex.

In terms of biological role, forms part of the ribosomal stalk, playing a central role in the interaction of the ribosome with GTP-bound translation factors. The sequence is that of Large ribosomal subunit protein uL10 from Bartonella bacilliformis (strain ATCC 35685 / KC583 / Herrer 020/F12,63).